The primary structure comprises 529 residues: Bifunctional purine biosynthesis protein PurH (529 aa).

The region spanning Met1 to Val148 is the MGS-like domain.

It belongs to the PurH family.

It carries out the reaction (6R)-10-formyltetrahydrofolate + 5-amino-1-(5-phospho-beta-D-ribosyl)imidazole-4-carboxamide = 5-formamido-1-(5-phospho-D-ribosyl)imidazole-4-carboxamide + (6S)-5,6,7,8-tetrahydrofolate. It catalyses the reaction IMP + H2O = 5-formamido-1-(5-phospho-D-ribosyl)imidazole-4-carboxamide. The protein operates within purine metabolism; IMP biosynthesis via de novo pathway; 5-formamido-1-(5-phospho-D-ribosyl)imidazole-4-carboxamide from 5-amino-1-(5-phospho-D-ribosyl)imidazole-4-carboxamide (10-formyl THF route): step 1/1. It functions in the pathway purine metabolism; IMP biosynthesis via de novo pathway; IMP from 5-formamido-1-(5-phospho-D-ribosyl)imidazole-4-carboxamide: step 1/1. The protein is Bifunctional purine biosynthesis protein PurH of Pectobacterium atrosepticum (strain SCRI 1043 / ATCC BAA-672) (Erwinia carotovora subsp. atroseptica).